A 115-amino-acid polypeptide reads, in one-letter code: Non-specific lipid-transfer protein Cw18 (115 aa).

The N-terminal stretch at 1 to 25 (MARTAATKLALVALVAAMLLVAADA) is a signal peptide. 4 disulfide bridges follow: cysteine 29-cysteine 77, cysteine 39-cysteine 54, cysteine 55-cysteine 97, and cysteine 75-cysteine 111.

This sequence belongs to the plant LTP family. In terms of tissue distribution, highly expressed in leaves and coleoptiles. No expression in roots.

In terms of biological role, plant non-specific lipid-transfer proteins transfer phospholipids as well as galactolipids across membranes. May play a role in wax or cutin deposition in the cell walls of expanding epidermal cells and certain secretory tissues. This Hordeum vulgare (Barley) protein is Non-specific lipid-transfer protein Cw18 (CW18).